Reading from the N-terminus, the 271-residue chain is MKRVTGVNSRRVLRQAVRVSLKPVYKMYERILEEKVKEGRVPEHVGIIMDGNRRFARELGLEPWEGHRYGADKLEDVLEWCLDLGVKAVTVYALSTENLNRPKEELKRLFDLMEERFKALAESERIHRRKVAVRAVGRLHLLPTRVRRAIKKAERATKEYKDRFLNVAVAYGGRQEIIDAVREIAHDVKVGRLDPDEIDEGTFRKYVYVGDLPDPELIIRTSGEERLSNFLLWYSAYSELYFVDVYWPEFRKIDLLRAIREFQKRERRFGR.

Aspartate 50 is an active-site residue. Position 50 (aspartate 50) interacts with Mg(2+). Residues 51 to 54 (GNRR), phenylalanine 55, histidine 67, and 95 to 97 (STE) each bind substrate. Catalysis depends on asparagine 98, which acts as the Proton acceptor. Residues arginine 101, arginine 220, and 226–228 (RLS) each bind substrate. Glutamate 239 lines the Mg(2+) pocket.

This sequence belongs to the UPP synthase family. In terms of assembly, homodimer. Requires Mg(2+) as cofactor.

It catalyses the reaction geranylgeranyl diphosphate + 7 isopentenyl diphosphate = tri-trans,hepta-cis-undecaprenyl diphosphate + 7 diphosphate. In terms of biological role, catalyzes the sequential condensation of isopentenyl diphosphate (IPP) with geranylgeranyl diphosphate (GGPP) to yield (2Z,6Z,10Z,14Z,18Z,22Z,26Z,30E,34E,38E)-undecaprenyl diphosphate (tritrans,heptacis-UPP). It is probably the precursor of glycosyl carrier lipids. In Methanopyrus kandleri (strain AV19 / DSM 6324 / JCM 9639 / NBRC 100938), this protein is Tritrans,polycis-undecaprenyl-diphosphate synthase (geranylgeranyl-diphosphate specific).